The following is a 20-amino-acid chain: Ferric reductase A (20 aa).

Monomer.

It catalyses the reaction 2 a Fe(II)-siderophore + NAD(+) + H(+) = 2 a Fe(III)-siderophore + NADH. Its function is as follows. Reductase activity that acts on Fe(3+)-chelates and NADH as an electron donor and requires the presence of FMN for full activity. May play a role in iron uptake. This is Ferric reductase A (ferA) from Paracoccus denitrificans.